Consider the following 177-residue polypeptide: CCHC-type zinc finger nucleic acid binding protein (177 aa).

Serine 2 is subject to N-acetylserine. A CCHC-type 1 zinc finger spans residues asparagine 4–threonine 21. Lysine 8 bears the N6-acetyllysine mark. 2 positions are modified to omega-N-methylarginine; by PRMT1: arginine 25 and arginine 27. The segment at arginine 25–threonine 38 is RNA-binding Arg/Gly-rich region (RGG-box). An omega-N-methylarginine mark is found at arginine 32 and arginine 34. A Phosphoserine modification is found at serine 49. 6 consecutive CCHC-type zinc fingers follow at residues aspartate 52–leucine 69, aspartate 72–glutamate 89, glutamine 96–histidine 113, glutamine 117–lysine 134, valine 135–lysine 152, and valine 156–isoleucine 173. An omega-N-methylarginine mark is found at alanine 73, arginine 79, and glycine 80.

As to quaternary structure, associates with the 40S ribosomal subunit, the 80S ribosome and with polysomes. Arginine methylation by PRMT1 in the Arg/Gly-rich region impedes RNA binding. Expressed in the liver, kidney, spleen, testis, lung, muscle and adrenal glands.

The protein localises to the nucleus. It localises to the cytoplasm. The protein resides in the endoplasmic reticulum. In terms of biological role, single-stranded DNA-binding protein that preferentially binds to the sterol regulatory element (SRE) sequence 5'-GTGCGGTG-3', and thereby mediates transcriptional repression. Has a role as transactivator of the Myc promoter. Binds single-stranded RNA in a sequence-specific manner. Functionally, binds G-rich elements in target mRNA coding sequences. Prevents G-quadruplex structure formation in vitro, suggesting a role in supporting translation by resolving stable structures on mRNAs. Its function is as follows. Binds to RNA. The protein is CCHC-type zinc finger nucleic acid binding protein of Homo sapiens (Human).